The following is a 408-amino-acid chain: CinA-like protein (408 aa).

Belongs to the CinA family.

The sequence is that of CinA-like protein from Fervidobacterium nodosum (strain ATCC 35602 / DSM 5306 / Rt17-B1).